A 102-amino-acid polypeptide reads, in one-letter code: Small ribosomal subunit protein uS10 (102 aa).

Belongs to the universal ribosomal protein uS10 family. As to quaternary structure, part of the 30S ribosomal subunit.

In terms of biological role, involved in the binding of tRNA to the ribosomes. The polypeptide is Small ribosomal subunit protein uS10 (Leifsonia xyli subsp. xyli (strain CTCB07)).